The chain runs to 302 residues: Tetrahydromethanopterin S-methyltransferase subunit E (302 aa).

The next 6 helical transmembrane spans lie at 3–23, 86–106, 132–152, 155–175, 233–253, and 259–279; these read PLIS…AGAS, PLFA…TFAV, ITPI…VSYL, VVLG…ITIG, PVTG…TTIF, and LGWL…IWNW.

It belongs to the MtrE family. In terms of assembly, the complex is composed of 8 subunits; MtrA, MtrB, MtrC, MtrD, MtrE, MtrF, MtrG and MtrH.

It is found in the cell membrane. It catalyses the reaction 5-methyl-5,6,7,8-tetrahydromethanopterin + coenzyme M + 2 Na(+)(in) = 5,6,7,8-tetrahydromethanopterin + methyl-coenzyme M + 2 Na(+)(out). It participates in one-carbon metabolism; methanogenesis from CO(2); methyl-coenzyme M from 5,10-methylene-5,6,7,8-tetrahydromethanopterin: step 2/2. In terms of biological role, part of a complex that catalyzes the formation of methyl-coenzyme M and tetrahydromethanopterin from coenzyme M and methyl-tetrahydromethanopterin. This is an energy-conserving, sodium-ion translocating step. This chain is Tetrahydromethanopterin S-methyltransferase subunit E, found in Methanosarcina barkeri (strain Fusaro / DSM 804).